Consider the following 488-residue polypeptide: 3-octaprenyl-4-hydroxybenzoate carboxy-lyase (488 aa).

Position 172 (Asn-172) interacts with Mn(2+). Residues Ile-175–Arg-177, Arg-189–Leu-191, and Arg-194–Gly-195 each bind prenylated FMN. Mn(2+) is bound at residue Glu-238. Catalysis depends on Asp-287, which acts as the Proton donor.

The protein belongs to the UbiD family. As to quaternary structure, homohexamer. Prenylated FMN serves as cofactor. The cofactor is Mn(2+).

The protein localises to the cell membrane. It catalyses the reaction a 4-hydroxy-3-(all-trans-polyprenyl)benzoate + H(+) = a 2-(all-trans-polyprenyl)phenol + CO2. Its pathway is cofactor biosynthesis; ubiquinone biosynthesis. Catalyzes the decarboxylation of 3-octaprenyl-4-hydroxy benzoate to 2-octaprenylphenol, an intermediate step in ubiquinone biosynthesis. The polypeptide is 3-octaprenyl-4-hydroxybenzoate carboxy-lyase (Azotobacter vinelandii (strain DJ / ATCC BAA-1303)).